An 81-amino-acid chain; its full sequence is Protein Vpu (81 aa).

The Extracellular segment spans residues 1 to 7; the sequence is MQPLQIL. A helical membrane pass occupies residues 8-28; it reads AIVALVVAAIIAIVVWTIVYI. Topologically, residues 29–81 are cytoplasmic; the sequence is EYRKILRQRKIDRLIDRITERAEDSGNESEGDQEELSALVERGHLAPWDVDDL. Residues 50 to 81 form a disordered region; it reads AEDSGNESEGDQEELSALVERGHLAPWDVDDL. 2 positions are modified to phosphoserine; by host CK2: Ser53 and Ser57. Positions 53–63 are enriched in acidic residues; that stretch reads SGNESEGDQEE.

It belongs to the HIV-1 VPU protein family. As to quaternary structure, homopentamer. Interacts with host CD4 and BRTC; these interactions induce proteasomal degradation of CD4. Interacts with host BST2; this interaction leads to the degradation of host BST2. Interacts with host FBXW11. Interacts with host AP1M1; this interaction plays a role in the mistrafficking and subsequent degradation of host BST2. Interacts with host RANBP2; this interaction allows Vpu to down-regulate host BLM sumoylation. Phosphorylated by host CK2. This phosphorylation is necessary for interaction with human BTRC and degradation of CD4.

The protein localises to the host membrane. Its activity is regulated as follows. Ion channel activity is inhibited by hexamethylene amiloride in vitro. Its function is as follows. Enhances virion budding by targeting host CD4 and Tetherin/BST2 to proteasome degradation. Degradation of CD4 prevents any unwanted premature interactions between viral Env and its host receptor CD4 in the endoplasmic reticulum. Degradation of antiretroviral protein Tetherin/BST2 is important for virion budding, as BST2 tethers new viral particles to the host cell membrane. Mechanistically, Vpu bridges either CD4 or BST2 to BTRC, a substrate recognition subunit of the Skp1/Cullin/F-box protein E3 ubiquitin ligase, induces their ubiquitination and subsequent proteasomal degradation. The alteration of the E3 ligase specificity by Vpu seems to promote the degradation of host IKBKB, leading to NF-kappa-B down-regulation and subsequent apoptosis. Acts as a viroporin that forms an oligomeric ion channel in membranes. Modulates the host DNA repair mechanisms to promote degradation of nuclear viral cDNA in cells that are already productively infected in order to suppress immune sensing and proviral hyper-integration (superinfection). Manipulates PML-NBs and modulates SUMOylation of host BLM protein thereby enhancing its DNA-end processing activity toward viral unintegrated linear DNA. Also inhibits RAD52-mediated homologous repair of viral cDNA, preventing the generation of dead-end circular forms of single copies of the long terminal repeat and permitting sustained nucleolytic attack. The protein is Protein Vpu of Human immunodeficiency virus type 1 group M subtype B (isolate SF162) (HIV-1).